The sequence spans 132 residues: Ubiquinol-cytochrome c reductase complex assembly factor 4 (132 aa).

Positions M1–A15 are cleaved as a signal peptide. Residues L16–K78 lie on the Mitochondrial matrix side of the membrane. The interval R24–Q73 is disordered. Residues S32–T50 show a composition bias toward basic and acidic residues. A helical transmembrane segment spans residues V79–L95. Over R96 to T132 the chain is Mitochondrial intermembrane. The tract at residues G110 to T132 is disordered.

It belongs to the UQCC4 family. Forms a complex, named COMB/coordinator of mitochondrial CYTB biogenesis, composed of UQCC1, UQCC2, UQCC4, UQCC5 and UQCC6; stabilizes nascent cytochrome b/MT-CYB and promotes its membrane insertion. Forms a complex, named COMA, composed of UQCC1, UQCC2 and UQCC4; activates MT-CYB translation. Forms a complex, named COMC, composed of UQCC1, UQCC2; UQCC3 and UQCC4; mediates MT-CYB hemylation and association with the first nuclear-encoded complex III subunit UQCRQ. Complexes COMA and COMB are bound to the mitochondrion inner membrane by UQCC4.

It is found in the mitochondrion inner membrane. In terms of biological role, required for the assembly and stability of the mitochondrial ubiquinol-cytochrome c reductase complex (complex III (CIII) or cytochrome b-c1 complex), a multisubunit transmembrane complex that is part of the mitochondrial electron transport chain (ETC) which drives oxidative phosphorylation. This Pongo abelii (Sumatran orangutan) protein is Ubiquinol-cytochrome c reductase complex assembly factor 4 (UQCC4).